We begin with the raw amino-acid sequence, 181 residues long: Probable pyruvoyl-dependent arginine decarboxylase (181 aa).

Serine 43 is subject to Pyruvic acid (Ser).

The protein belongs to the PdaD family. It depends on pyruvate as a cofactor.

It catalyses the reaction L-arginine + H(+) = agmatine + CO2. The protein is Probable pyruvoyl-dependent arginine decarboxylase of Prosthecochloris aestuarii (strain DSM 271 / SK 413).